A 37-amino-acid chain; its full sequence is Cytochrome b6-f complex subunit 5 (37 aa).

A helical transmembrane segment spans residues 5–25 (LLSGIVLGMIPITLAGLFVTA).

The protein belongs to the PetG family. As to quaternary structure, the 4 large subunits of the cytochrome b6-f complex are cytochrome b6, subunit IV (17 kDa polypeptide, PetD), cytochrome f and the Rieske protein, while the 4 small subunits are PetG, PetL, PetM and PetN. The complex functions as a dimer.

It localises to the plastid. The protein resides in the chloroplast thylakoid membrane. Functionally, component of the cytochrome b6-f complex, which mediates electron transfer between photosystem II (PSII) and photosystem I (PSI), cyclic electron flow around PSI, and state transitions. PetG is required for either the stability or assembly of the cytochrome b6-f complex. The protein is Cytochrome b6-f complex subunit 5 of Mesostigma viride (Green alga).